The primary structure comprises 277 residues: Protein PTST, chloroplastic (277 aa).

A chloroplast-targeting transit peptide spans M1 to V44. Residues D95–N152 adopt a coiled-coil conformation.

As to quaternary structure, interacts with GBSS1.

Its subcellular location is the plastid. It is found in the chloroplast stroma. In terms of biological role, involved in targeting GBSS1 to the starch granule. Was originally thought to be a carbohydrate-binding scaffold protein, but it has been shown that it is mainly found as a soluble protein and that interaction with GBSS1 is a pre-requisite for subsequent starch granule binding. Dissociation from starch as a function of pH, Mg(2+) concentration or redox state is not observed. Interacts primarily with amylopectin and is required for amylose synthesis. The chain is Protein PTST, chloroplastic from Arabidopsis thaliana (Mouse-ear cress).